Reading from the N-terminus, the 516-residue chain is 2-isopropylmalate synthase (516 aa).

The Pyruvate carboxyltransferase domain maps to 10-271 (IRIFDTTLRD…TTGIDTRELA (262 aa)). Mn(2+) contacts are provided by aspartate 19, histidine 205, histidine 207, and asparagine 241. Positions 396–516 (ELVSFRVEAG…REKASNRETP (121 aa)) are regulatory domain.

It belongs to the alpha-IPM synthase/homocitrate synthase family. LeuA type 1 subfamily. As to quaternary structure, homodimer. It depends on Mn(2+) as a cofactor.

It is found in the cytoplasm. It catalyses the reaction 3-methyl-2-oxobutanoate + acetyl-CoA + H2O = (2S)-2-isopropylmalate + CoA + H(+). It participates in amino-acid biosynthesis; L-leucine biosynthesis; L-leucine from 3-methyl-2-oxobutanoate: step 1/4. Functionally, catalyzes the condensation of the acetyl group of acetyl-CoA with 3-methyl-2-oxobutanoate (2-ketoisovalerate) to form 3-carboxy-3-hydroxy-4-methylpentanoate (2-isopropylmalate). This is 2-isopropylmalate synthase from Acidimicrobium ferrooxidans (strain DSM 10331 / JCM 15462 / NBRC 103882 / ICP).